A 110-amino-acid polypeptide reads, in one-letter code: Large ribosomal subunit protein uL22 (110 aa).

The protein belongs to the universal ribosomal protein uL22 family. In terms of assembly, part of the 50S ribosomal subunit.

Functionally, this protein binds specifically to 23S rRNA; its binding is stimulated by other ribosomal proteins, e.g. L4, L17, and L20. It is important during the early stages of 50S assembly. It makes multiple contacts with different domains of the 23S rRNA in the assembled 50S subunit and ribosome. In terms of biological role, the globular domain of the protein is located near the polypeptide exit tunnel on the outside of the subunit, while an extended beta-hairpin is found that lines the wall of the exit tunnel in the center of the 70S ribosome. The sequence is that of Large ribosomal subunit protein uL22 from Leptospira borgpetersenii serovar Hardjo-bovis (strain JB197).